A 392-amino-acid polypeptide reads, in one-letter code: Chorismate synthase (392 aa).

NADP(+) contacts are provided by arginine 39 and arginine 45. Residues arginine 128–serine 130, glutamine 248–alanine 249, glycine 300, lysine 315–threonine 319, and arginine 341 each bind FMN.

Belongs to the chorismate synthase family. In terms of assembly, homotetramer. FMNH2 serves as cofactor.

The enzyme catalyses 5-O-(1-carboxyvinyl)-3-phosphoshikimate = chorismate + phosphate. Its pathway is metabolic intermediate biosynthesis; chorismate biosynthesis; chorismate from D-erythrose 4-phosphate and phosphoenolpyruvate: step 7/7. Functionally, catalyzes the anti-1,4-elimination of the C-3 phosphate and the C-6 proR hydrogen from 5-enolpyruvylshikimate-3-phosphate (EPSP) to yield chorismate, which is the branch point compound that serves as the starting substrate for the three terminal pathways of aromatic amino acid biosynthesis. This reaction introduces a second double bond into the aromatic ring system. In Trichlorobacter lovleyi (strain ATCC BAA-1151 / DSM 17278 / SZ) (Geobacter lovleyi), this protein is Chorismate synthase.